The primary structure comprises 408 residues: Acetate kinase (408 aa).

Asn10 contributes to the Mg(2+) binding site. Residue Lys17 participates in ATP binding. Position 96 (Arg96) interacts with substrate. The active-site Proton donor/acceptor is the Asp153. ATP contacts are provided by residues 213 to 217 and 288 to 290; these read HLGNG and DLR. Glu393 contacts Mg(2+).

It belongs to the acetokinase family. As to quaternary structure, homodimer. Requires Mg(2+) as cofactor. The cofactor is Mn(2+).

Its subcellular location is the cytoplasm. The catalysed reaction is acetate + ATP = acetyl phosphate + ADP. Its pathway is metabolic intermediate biosynthesis; acetyl-CoA biosynthesis; acetyl-CoA from acetate: step 1/2. Its function is as follows. Catalyzes the formation of acetyl phosphate from acetate and ATP. Can also catalyze the reverse reaction. The chain is Acetate kinase from Borrelia duttonii (strain Ly).